The primary structure comprises 269 residues: dITP/XTP pyrophosphatase (269 aa).

Ser22 to Lys27 contributes to the substrate binding site. Asp82 functions as the Proton acceptor in the catalytic mechanism. Residue Asp82 participates in Mg(2+) binding. Substrate is bound by residues Ser83, Phe165 to Asp168, Lys188, and His193 to Arg194.

It belongs to the HAM1 NTPase family. In terms of assembly, homodimer. Mg(2+) serves as cofactor.

The enzyme catalyses XTP + H2O = XMP + diphosphate + H(+). It catalyses the reaction dITP + H2O = dIMP + diphosphate + H(+). The catalysed reaction is ITP + H2O = IMP + diphosphate + H(+). Pyrophosphatase that catalyzes the hydrolysis of nucleoside triphosphates to their monophosphate derivatives, with a high preference for the non-canonical purine nucleotides XTP (xanthosine triphosphate), dITP (deoxyinosine triphosphate) and ITP. Seems to function as a house-cleaning enzyme that removes non-canonical purine nucleotides from the nucleotide pool, thus preventing their incorporation into DNA/RNA and avoiding chromosomal lesions. The polypeptide is dITP/XTP pyrophosphatase (Treponema pallidum (strain Nichols)).